The following is a 511-amino-acid chain: ATP synthase subunit alpha (511 aa).

169–176 provides a ligand contact to ATP; sequence GDRQTGKT.

Belongs to the ATPase alpha/beta chains family. F-type ATPases have 2 components, CF(1) - the catalytic core - and CF(0) - the membrane proton channel. CF(1) has five subunits: alpha(3), beta(3), gamma(1), delta(1), epsilon(1). CF(0) has three main subunits: a(1), b(2) and c(9-12). The alpha and beta chains form an alternating ring which encloses part of the gamma chain. CF(1) is attached to CF(0) by a central stalk formed by the gamma and epsilon chains, while a peripheral stalk is formed by the delta and b chains.

Its subcellular location is the cell inner membrane. It carries out the reaction ATP + H2O + 4 H(+)(in) = ADP + phosphate + 5 H(+)(out). In terms of biological role, produces ATP from ADP in the presence of a proton gradient across the membrane. The alpha chain is a regulatory subunit. In Bartonella tribocorum (strain CIP 105476 / IBS 506), this protein is ATP synthase subunit alpha.